The following is a 369-amino-acid chain: Histidinol-phosphate aminotransferase 2 (369 aa).

K227 carries the post-translational modification N6-(pyridoxal phosphate)lysine.

The protein belongs to the class-II pyridoxal-phosphate-dependent aminotransferase family. Histidinol-phosphate aminotransferase subfamily. As to quaternary structure, homodimer. Requires pyridoxal 5'-phosphate as cofactor.

It catalyses the reaction L-histidinol phosphate + 2-oxoglutarate = 3-(imidazol-4-yl)-2-oxopropyl phosphate + L-glutamate. Its pathway is amino-acid biosynthesis; L-histidine biosynthesis; L-histidine from 5-phospho-alpha-D-ribose 1-diphosphate: step 7/9. The sequence is that of Histidinol-phosphate aminotransferase 2 (hisC2) from Mesorhizobium japonicum (strain LMG 29417 / CECT 9101 / MAFF 303099) (Mesorhizobium loti (strain MAFF 303099)).